The following is a 205-amino-acid chain: Small ribosomal subunit protein uS4 (205 aa).

Basic and acidic residues predominate over residues 1-16; sequence MSKRESSKYKIDRRMG. The tract at residues 1–46 is disordered; it reads MSKRESSKYKIDRRMGENIWGRPKSPVNRREYGPGQHGQRRKGKLS. The S4 RNA-binding domain maps to 94-157; sequence SRLDAIVYRA…KQLVTVLEAV (64 aa).

This sequence belongs to the universal ribosomal protein uS4 family. As to quaternary structure, part of the 30S ribosomal subunit. Contacts protein S5. The interaction surface between S4 and S5 is involved in control of translational fidelity.

In terms of biological role, one of the primary rRNA binding proteins, it binds directly to 16S rRNA where it nucleates assembly of the body of the 30S subunit. Functionally, with S5 and S12 plays an important role in translational accuracy. In Rhizobium etli (strain CIAT 652), this protein is Small ribosomal subunit protein uS4.